The sequence spans 540 residues: MLWGISSALDLYEEYLRAFKIKDDPLPEDEHAREEAEEAAGDNTLNTLNILICGGADPRHVIKTLAKRYTHRIRPKLNIYLLDGCAEIEARNMLLLGVALEDPESFNLVSKVHLFMDLYGNAVIRPSSHHYMAAKGRTLLKMVTNEEELQRLAPMLNIEGLKYKERDGFEMAFTFWQPQPWNVFEVTAYWEQRSRALLGTRYDHRNGAFDWDLSMTLKERGGQQICSQEYRYWRETGVAFVFPEYEHCKPNKTLAVGLVRNGRNFIHRGYVGDIQTGPFCGFGLRTVEERMHHSVHGDNDYRATDITERNLMEFFHELLTQTAYEHDTTRSRRYGSVQLLMTPLLNHQEEDAAGQAAYDKPWIHVPGVTVHFVSPMEMEQLKKGAAHWNNMFDIVFMAYNYYSFLSKDFFQAMRAQSLFILETKLMTVERKDRVQEYESKAKELMKDAGLKAAINYQAINGKNMWLKYKKTDKDEQEDEAVTEAMPESTFKYDTDTDYGEPAEEYTGLVIEEIPSSNQTVAAIKKEVEAEGPLQPKTNFP.

Residues 480–499 (AVTEAMPESTFKYDTDTDYG) are disordered.

Belongs to the DNAAF3 family. As to expression, expressed in mechanosensory chordotonal (Ch) neurons, spermatocytes and spermatids (at protein level).

It localises to the cytoplasm. Its subcellular location is the dynein axonemal particle. Its function is as follows. Required for the assembly of axonemal inner and outer dynein arms. Involved in the cytoplasmic preassembly of dyneins into complexes before their transport into cilia. Essential for the development of axonemal dynein motors in the sensory cilium of mechanosensory chordotonal (Ch) neurons and sperm flagellum, and consequently, is required for the mechanotransduction process of hearing and sperm mobility. The polypeptide is Dynein axonemal assembly factor 3 homolog (Drosophila melanogaster (Fruit fly)).